The following is a 277-amino-acid chain: NH(3)-dependent NAD(+) synthetase (277 aa).

47 to 54 provides a ligand contact to ATP; the sequence is GISGGQDS. Asp-53 provides a ligand contact to Mg(2+). Arg-141 contributes to the deamido-NAD(+) binding site. Position 161 (Thr-161) interacts with ATP. Glu-166 provides a ligand contact to Mg(2+). Residues Lys-174 and Asp-181 each coordinate deamido-NAD(+). 2 residues coordinate ATP: Lys-190 and Thr-212. Residue 261 to 262 coordinates deamido-NAD(+); that stretch reads HK.

The protein belongs to the NAD synthetase family. Homodimer.

It carries out the reaction deamido-NAD(+) + NH4(+) + ATP = AMP + diphosphate + NAD(+) + H(+). It functions in the pathway cofactor biosynthesis; NAD(+) biosynthesis; NAD(+) from deamido-NAD(+) (ammonia route): step 1/1. In terms of biological role, catalyzes the ATP-dependent amidation of deamido-NAD to form NAD. Uses ammonia as a nitrogen source. This chain is NH(3)-dependent NAD(+) synthetase, found in Lactobacillus gasseri (strain ATCC 33323 / DSM 20243 / BCRC 14619 / CIP 102991 / JCM 1131 / KCTC 3163 / NCIMB 11718 / NCTC 13722 / AM63).